The sequence spans 374 residues: MHFPALAVAGCLLSRATAQSLDQVLAKRDSFSLLRDLLHQHGLVDELEFTANATFFAMTNQALRSLADFGINLTTADPNIARAIFKYAQLDAIYTTDTVKALHHEAKVVQTALQPHLFNNLTRGQAAKLRSNRTGGANGILVESGLGVLTPVVEADIPYDHGVIHAIDANMVLPHNISETARLGGMTEFLNLLERSDSVARLESLSDVTIFIPQDEALAKLQPILDMLTSEQLKSVVAQHAVPNRVLYQSLFDGVETLETLDGSTLRIRRGKRGEIFVNGAEVVRTDLLLYGGVAHLIDGALLPEKDASCSTGLFAAAAGGSSRVWKILASHQLTLLAVLAMALVSILYKAYQSRKQSHQLIRPSDGLGNYEKV.

The N-terminal stretch at 1-18 (MHFPALAVAGCLLSRATA) is a signal peptide. 2 consecutive FAS1 domains span residues 19–171 (QSLD…DANM) and 173–302 (LPHN…DGAL). Asn-52, Asn-72, Asn-120, Asn-132, and Asn-176 each carry an N-linked (GlcNAc...) asparagine glycan. Residues 328–348 (ILASHQLTLLAVLAMALVSIL) traverse the membrane as a helical segment.

Belongs to the fasciclin-like AGP family.

It is found in the membrane. It functions in the pathway mycotoxin biosynthesis. Functionally, fasciclin-like arabinogalactan protein; part of the gene cluster that mediates the biosynthesis of cercosporin, a light-activated, non-host-selective toxin. The perylenequinone chromophore of cercosporin absorbs light energy to attain an electronically-activated triplet state and produces active oxygen species such as the hydroxyl radical, superoxide, hydrogen peroxide or singlet oxygen upon reaction with oxygen molecules. These reactive oxygen species cause damage to various cellular components including lipids, proteins and nucleic acids. The first step of cercosporin biosynthesis is performed by the polyketide synthase CTB1 which catalyzes the formation of nor-toralactone. The starter unit acyltransferase (SAT) domain of CTB1 initiates polyketide extension by the selective utilization of acetyl-CoA, which is elongated to the heptaketide in the beta-ketoacyl synthase (KS) domain by successive condensations with six malonyl units introduced by the malonyl acyltransferase (MAT) domain. The product template (PT) domain catalyzes C4-C9 and C2-C11 aldol cyclizations and dehydrations to a trihydroxynaphthalene, which is thought to be delivered to the thioesterase (TE) domain for product release. The bifunctional enzyme CTB3 then methylates nor-toralactone to toralactone before conducting an unusual oxidative aromatic ring opening. The O-methyltransferase CTB2 further methylates the nascent OH-6 of the CBT3 product, blocking further oxidation at this site before the reductase CTB6 reduces the 2-oxopropyl ketone at position C7, giving naphthalene. The FAD-dependent monooxygenase CTB5 in concert with the multicopper oxidase CTB12 are responsible for homodimerization of naphthalene with CTB7 installing the dioxepine moiety, finally producing cercosporin. The fasciclin domain-containing protein CTB11 might act with CTB5 and CTB12 whereas the roles of CTB9 and CTB10 have still to be elucidated. The chain is Fasciclin-like arabinogalactan protein CTB11 from Cercospora beticola (Sugarbeet leaf spot fungus).